A 279-amino-acid chain; its full sequence is Methyltransferase prhM (279 aa).

Residues 124–125 (DI) and 152–153 (DV) contribute to the S-adenosyl-L-methionine site.

This sequence belongs to the class I-like SAM-binding methyltransferase superfamily.

It functions in the pathway secondary metabolite biosynthesis; terpenoid biosynthesis. Functionally, methyltransferase; part of the gene cluster that mediates the biosynthesis of paraherquonin, a meroterpenoid with a unique, highly congested hexacyclic molecular architecture. The first step of the pathway is the synthesis of 3,5-dimethylorsellinic acid (DMOA) by the polyketide synthase prhL. Synthesis of DMOA is followed by farnesylation by the prenyltransferase prhE, methylesterification by the methyl-transferase prhM, epoxidation of the prenyl chain by the flavin-dependent monooxygenase prhF, and cyclization of the farnesyl moiety by the terpene cyclase prhH, to yield the tetracyclic intermediate, protoaustinoid A. The short chain dehydrogenase prhI then oxidizes the C-3 alcohol group of the terpene cyclase product to transform protoaustinoid A into protoaustinoid B. The FAD-binding monooxygenase prhJ catalyzes the oxidation of protoaustinoid B into preaustinoid A which is further oxidized into preaustinoid A1 by FAD-binding monooxygenase phrK. Finally, prhA leads to berkeleydione via the berkeleyone B intermediate. PrhA is a multifunctional dioxygenase that first desaturates at C5-C6 to form berkeleyone B, followed by rearrangement of the A/B-ring to form the cycloheptadiene moiety in berkeleydione. Berkeleydione serves as the key intermediate for the biosynthesis of paraherquonin as well as many other meroterpenoids. The cytochrome P450 monooxygenases prhB, prhD, and prhN, as well as the isomerase prhC, are probably involved in the late stage of paraherquonin biosynthesis, after the production of berkeleydione. Especially prhC might be a multifunctional enzyme that catalyzes the D-ring expansion via intramolecular methoxy rearrangement, as well as the hydrolysis of the expanded D-ring. In Penicillium brasilianum, this protein is Methyltransferase prhM.